Consider the following 102-residue polypeptide: Cytochrome b (102 aa).

Transmembrane regions (helical) follow at residues 1–21, 45–66, and 81–101; these read FGSL…FLAM, WLIR…YMHI, and WNIG…GYVF. Heme b is bound by residues histidine 51 and histidine 65.

This sequence belongs to the cytochrome b family. In terms of assembly, the cytochrome bc1 complex contains 3 respiratory subunits (MT-CYB, CYC1 and UQCRFS1), 2 core proteins (UQCRC1 and UQCRC2) and probably 6 low-molecular weight proteins. It depends on heme b as a cofactor.

It localises to the mitochondrion inner membrane. In terms of biological role, component of the ubiquinol-cytochrome c reductase complex (complex III or cytochrome b-c1 complex) that is part of the mitochondrial respiratory chain. The b-c1 complex mediates electron transfer from ubiquinol to cytochrome c. Contributes to the generation of a proton gradient across the mitochondrial membrane that is then used for ATP synthesis. This chain is Cytochrome b (mt-cyb), found in Plethodon yonahlossee (Yonahlossee salamander).